The chain runs to 249 residues: ATP synthase subunit a, chloroplastic (249 aa).

The next 5 membrane-spanning stretches (helical) occupy residues 40 to 60 (QVLI…VLAI), 97 to 117 (VPFI…GALL), 136 to 156 (INTT…AGLS), 201 to 221 (LVVV…VMFL), and 222 to 242 (GLFT…AYIG).

This sequence belongs to the ATPase A chain family. As to quaternary structure, F-type ATPases have 2 components, CF(1) - the catalytic core - and CF(0) - the membrane proton channel. CF(1) has five subunits: alpha(3), beta(3), gamma(1), delta(1), epsilon(1). CF(0) has four main subunits: a, b, b' and c.

It localises to the plastid. The protein localises to the chloroplast thylakoid membrane. Functionally, key component of the proton channel; it plays a direct role in the translocation of protons across the membrane. The chain is ATP synthase subunit a, chloroplastic from Nasturtium officinale (Watercress).